A 121-amino-acid polypeptide reads, in one-letter code: Large ribosomal subunit protein bL12 (121 aa).

Belongs to the bacterial ribosomal protein bL12 family. Homodimer. Part of the ribosomal stalk of the 50S ribosomal subunit. Forms a multimeric L10(L12)X complex, where L10 forms an elongated spine to which 2 to 4 L12 dimers bind in a sequential fashion. Binds GTP-bound translation factors.

Functionally, forms part of the ribosomal stalk which helps the ribosome interact with GTP-bound translation factors. Is thus essential for accurate translation. In Psychromonas ingrahamii (strain DSM 17664 / CCUG 51855 / 37), this protein is Large ribosomal subunit protein bL12.